Here is a 521-residue protein sequence, read N- to C-terminus: Non-specific phospholipase C5 (521 aa).

Positions 478–487 are enriched in basic and acidic residues; sequence SKKARERGGD. The disordered stretch occupies residues 478–521; that stretch reads SKKARERGGDENDIVFCVDDDDDHNVVKPPPSQSEPSHATPWSN. The segment covering 511 to 521 has biased composition (polar residues); the sequence is SEPSHATPWSN.

This sequence belongs to the bacterial phospholipase C family. In terms of tissue distribution, specifically expressed in flowers.

Its subcellular location is the cytoplasm. The protein localises to the cytosol. It catalyses the reaction a 1,2-diacyl-sn-glycero-3-phosphocholine + H2O = phosphocholine + a 1,2-diacyl-sn-glycerol + H(+). Its function is as follows. Non-specific phospholipase C (PLC) which assumes minor PLC activity during inorganic phosphate starvation. Can hydrolyze both phosphatidylcholine (PC) and phosphatidylethanolamine (PE). Required for normal accumulation of digalactosyldiacylglycerol (DGDG) during phosphate limitation and may contribute to the conversion of phospholipids to diacylglycerol, the substrate for galactolipid synthesis. The polypeptide is Non-specific phospholipase C5 (NPC5) (Arabidopsis thaliana (Mouse-ear cress)).